Consider the following 397-residue polypeptide: Myb family transcription factor PHL4 (397 aa).

Residues 1 to 27 (MIPNDDDDANSMKNYPLNDDDANSMKN) form a disordered region. The region spanning 228–288 (AAAKGRMRWT…HLQKYRTAKY (61 aa)) is the HTH myb-type domain. A DNA-binding region (H-T-H motif) is located at residues 259-284 (PKGVLKHMKVEGLTIFHVKSHLQKYR). The segment at 319–339 (TETLRIQMEHQKKLHEQLESL) is coiled coil. Residues 332–337 (LHEQLE) carry the LHEQLE motif. A disordered region spans residues 359–397 (KQNMGFGGPEQGEKTSAKTPENGSEESESPRPKRPRNEE). Positions 386–397 (ESPRPKRPRNEE) are enriched in basic and acidic residues. Ser-387 is subject to Phosphoserine.

This sequence belongs to the MYB-CC family.

Its subcellular location is the nucleus. Its function is as follows. Transcription factor involved in male gametophyte development. The chain is Myb family transcription factor PHL4 from Arabidopsis thaliana (Mouse-ear cress).